The sequence spans 200 residues: UPF0301 protein Veis_1517 (200 aa).

Belongs to the UPF0301 (AlgH) family.

The sequence is that of UPF0301 protein Veis_1517 from Verminephrobacter eiseniae (strain EF01-2).